The primary structure comprises 267 residues: 2-keto-3-deoxy-L-rhamnonate aldolase (267 aa).

Residue histidine 49 is the Proton acceptor of the active site. Glutamine 151 is a substrate binding site. Residue glutamate 153 coordinates Mg(2+). Residues alanine 178 and aspartate 179 each contribute to the substrate site. Position 179 (aspartate 179) interacts with Mg(2+).

The protein belongs to the HpcH/HpaI aldolase family. KDR aldolase subfamily. Homohexamer. Mg(2+) serves as cofactor.

The enzyme catalyses 2-dehydro-3-deoxy-L-rhamnonate = (S)-lactaldehyde + pyruvate. In terms of biological role, catalyzes the reversible retro-aldol cleavage of 2-keto-3-deoxy-L-rhamnonate (KDR) to pyruvate and lactaldehyde. This Salmonella paratyphi A (strain ATCC 9150 / SARB42) protein is 2-keto-3-deoxy-L-rhamnonate aldolase.